A 240-amino-acid polypeptide reads, in one-letter code: Ribosomal RNA small subunit methyltransferase G (240 aa).

S-adenosyl-L-methionine-binding positions include glycine 79, phenylalanine 84, 130-131 (AE), and arginine 149.

The protein belongs to the methyltransferase superfamily. RNA methyltransferase RsmG family.

It is found in the cytoplasm. Its function is as follows. Specifically methylates the N7 position of a guanine in 16S rRNA. The chain is Ribosomal RNA small subunit methyltransferase G from Lactobacillus acidophilus (strain ATCC 700396 / NCK56 / N2 / NCFM).